We begin with the raw amino-acid sequence, 501 residues long: Splicing factor ESS-2 homolog (501 aa).

2 stretches are compositionally biased toward low complexity: residues 1–18 (MSAT…GTPG) and 105–115 (ISGTGRSTSRR). Disordered stretches follow at residues 1–20 (MSAT…PGSL) and 105–163 (ISGT…GRDT). Polar residues predominate over residues 126-151 (TPVSQAKCSNTPLPNSRATDTPFSTD). Over residues 152–163 (GSEKSDAEGRDT) the composition is skewed to basic and acidic residues. 2 positions are modified to phosphoserine: serine 409 and serine 411. The interval 425–471 (RGTPRLRHTPSPMSGRKRKVTPGVVRSTNTPILGEPKPKQQAKISTP) is disordered.

It belongs to the ESS2 family.

The protein localises to the nucleus. This chain is Splicing factor ESS-2 homolog (Es2), found in Drosophila melanogaster (Fruit fly).